The following is a 425-amino-acid chain: Adenosylhomocysteinase (425 aa).

The substrate site is built by T60, D132, and E157. 158 to 160 (TTT) is an NAD(+) binding site. Residues K187 and D191 each coordinate substrate. NAD(+) is bound by residues N192, 221–226 (GYGWCG), E244, N279, 300–302 (SGH), and N347.

This sequence belongs to the adenosylhomocysteinase family. NAD(+) is required as a cofactor.

Its subcellular location is the cytoplasm. It carries out the reaction S-adenosyl-L-homocysteine + H2O = L-homocysteine + adenosine. Its pathway is amino-acid biosynthesis; L-homocysteine biosynthesis; L-homocysteine from S-adenosyl-L-homocysteine: step 1/1. Functionally, may play a key role in the regulation of the intracellular concentration of adenosylhomocysteine. This is Adenosylhomocysteinase from Nostoc sp. (strain PCC 7120 / SAG 25.82 / UTEX 2576).